The following is a 399-amino-acid chain: Acetate kinase (399 aa).

Asn8 contacts Mg(2+). Lys15 provides a ligand contact to ATP. A substrate-binding site is contributed by Arg89. Asp146 (proton donor/acceptor) is an active-site residue. Residues 206–210 (HVGNG), 283–285 (DMR), and 331–335 (GMGEN) contribute to the ATP site. Mg(2+) is bound at residue Glu383.

It belongs to the acetokinase family. In terms of assembly, homodimer. Mg(2+) is required as a cofactor. Requires Mn(2+) as cofactor.

It is found in the cytoplasm. The catalysed reaction is acetate + ATP = acetyl phosphate + ADP. The protein operates within metabolic intermediate biosynthesis; acetyl-CoA biosynthesis; acetyl-CoA from acetate: step 1/2. Catalyzes the formation of acetyl phosphate from acetate and ATP. Can also catalyze the reverse reaction. The sequence is that of Acetate kinase from Streptococcus equi subsp. equi (strain 4047).